A 254-amino-acid chain; its full sequence is MSFTVLIPARLASTRLPDKPLADIAGKPMVVRVAERAALSGAERVMIATDDARVQQAAAAHGHAAILTRPDHPTGTDRLSEAVDALGLPDDAIVVNVQGDEPLIEPALIDAVAAQLVAAPHADIATCACPLADAEALFNPNVVKVVCTADRRALYFSRAPIPWARDALAGGARVLAPGLPAWHHIGIYAYRVAFLRRFPALSQGQLERYESLEQLRAMEHGHVIVVHHTDSAPAAGVDTPADLERARAAYTNRL.

It belongs to the KdsB family.

It is found in the cytoplasm. The catalysed reaction is 3-deoxy-alpha-D-manno-oct-2-ulosonate + CTP = CMP-3-deoxy-beta-D-manno-octulosonate + diphosphate. Its pathway is nucleotide-sugar biosynthesis; CMP-3-deoxy-D-manno-octulosonate biosynthesis; CMP-3-deoxy-D-manno-octulosonate from 3-deoxy-D-manno-octulosonate and CTP: step 1/1. It functions in the pathway bacterial outer membrane biogenesis; lipopolysaccharide biosynthesis. Functionally, activates KDO (a required 8-carbon sugar) for incorporation into bacterial lipopolysaccharide in Gram-negative bacteria. In Bordetella pertussis (strain Tohama I / ATCC BAA-589 / NCTC 13251), this protein is 3-deoxy-manno-octulosonate cytidylyltransferase.